Consider the following 402-residue polypeptide: Large ribosomal subunit protein uL3 (402 aa).

The interval Met-1–Asp-35 is disordered. Residues Pro-18–Ala-31 are compositionally biased toward basic residues.

The protein belongs to the universal ribosomal protein uL3 family.

It is found in the cytoplasm. Its function is as follows. The L3 protein is a component of the large subunit of cytoplasmic ribosomes. The sequence is that of Large ribosomal subunit protein uL3 (RPL3) from Toxocara canis (Canine roundworm).